Reading from the N-terminus, the 180-residue chain is Tubulin polymerization-promoting protein homolog (180 aa).

2 stretches are compositionally biased toward basic and acidic residues: residues 136–158 and 169–180; these read TGAH…RADT and KNKDSYDKTHGK. The segment at 136–180 is disordered; sequence TGAHKERFDAEGKGKGKSGRADTTENTGYVGAYKNKDSYDKTHGK.

It belongs to the TPPP family.

Regulator of microtubule dynamics. The chain is Tubulin polymerization-promoting protein homolog from Caenorhabditis elegans.